Reading from the N-terminus, the 337-residue chain is Biotin synthase 1 (337 aa).

The interval 1–23 (MSSVLTQPLAFHPPRPAVQPREH) is disordered. The 228-residue stretch at 57 to 284 (TRVEFATLLS…TARVRLSAGR (228 aa)) folds into the Radical SAM core domain. Positions 72, 76, and 79 each coordinate [4Fe-4S] cluster. [2Fe-2S] cluster is bound by residues C116, C147, C207, and R279.

The protein belongs to the radical SAM superfamily. Biotin synthase family. In terms of assembly, homodimer. [4Fe-4S] cluster serves as cofactor. The cofactor is [2Fe-2S] cluster.

It catalyses the reaction (4R,5S)-dethiobiotin + (sulfur carrier)-SH + 2 reduced [2Fe-2S]-[ferredoxin] + 2 S-adenosyl-L-methionine = (sulfur carrier)-H + biotin + 2 5'-deoxyadenosine + 2 L-methionine + 2 oxidized [2Fe-2S]-[ferredoxin]. The protein operates within cofactor biosynthesis; biotin biosynthesis; biotin from 7,8-diaminononanoate: step 2/2. Its function is as follows. Catalyzes the conversion of dethiobiotin (DTB) to biotin by the insertion of a sulfur atom into dethiobiotin via a radical-based mechanism. The sequence is that of Biotin synthase 1 from Polaromonas sp. (strain JS666 / ATCC BAA-500).